The primary structure comprises 129 residues: Small ribosomal subunit protein uS11 (129 aa).

Belongs to the universal ribosomal protein uS11 family. As to quaternary structure, part of the 30S ribosomal subunit. Interacts with proteins S7 and S18. Binds to IF-3.

Functionally, located on the platform of the 30S subunit, it bridges several disparate RNA helices of the 16S rRNA. Forms part of the Shine-Dalgarno cleft in the 70S ribosome. The protein is Small ribosomal subunit protein uS11 of Bacteroides thetaiotaomicron (strain ATCC 29148 / DSM 2079 / JCM 5827 / CCUG 10774 / NCTC 10582 / VPI-5482 / E50).